A 90-amino-acid chain; its full sequence is Accessory gland-specific peptide 26Ab (90 aa).

An N-terminal signal peptide occupies residues 1-21 (MNYFAVICIFSCICLWQFSDA).

Main cells and secondary cells of the accessory glands of 1 day old virgin males (at protein level). In 5 day old virgin males, only detected in the secondary cells (at protein level). Reappears in the main cells after mating (at protein level). First detected in adult males 3-4 hr after eclosion, levels increase reaching a peak at day 3-5 which is maintained until at least day 10 of adulthood (at protein level). In unmated male adults, levels are maintained for the first 6 days of adulthood and then gradually decrease for at least the next 8 days. No expression in females.

The protein localises to the secreted. The protein resides in the extracellular space. It is found in the cytoplasm. Its function is as follows. This protein is transferred from male to female during mating and may affect egglaying and behavior after mating. The chain is Accessory gland-specific peptide 26Ab from Drosophila melanogaster (Fruit fly).